The primary structure comprises 793 residues: Kinesin-like protein KIN-14C (793 aa).

The interval 1–43 (MASRNQNRPPRSPNAKKEGLGGISFDKRRKVETQGGTGRRQAF) is disordered. The tract at residues 1–69 (MASRNQNRPP…IEECGKVDFT (69 aa)) is globular. The span at 15–32 (AKKEGLGGISFDKRRKVE) shows a compositional bias: basic and acidic residues. Residues 120–375 (KENLKVSLES…EQQLAIANER (256 aa)) adopt a coiled-coil conformation. A Kinesin motor domain is found at 431–772 (NIRVFCRVRP…LRFAARVNAC (342 aa)). 516–523 (GQTGSGKT) provides a ligand contact to ATP.

Belongs to the TRAFAC class myosin-kinesin ATPase superfamily. Kinesin family. KIN-14 subfamily.

The protein resides in the cytoplasm. The protein localises to the cytoskeleton. Its subcellular location is the spindle. It is found in the phragmoplast. It localises to the chromosome. The protein resides in the centromere. The protein localises to the kinetochore. Its function is as follows. Kinesin that supports microtubule movement in an ATP-dependent manner and has a minus-end directed polarity. Plays a crucial role in spindle morphogenesis in male meiosis. In mitosis, is required for normal microtubule accumulation at the spindle poles during prophase and may play a role in spindle assembly during prometaphase. This chain is Kinesin-like protein KIN-14C, found in Arabidopsis thaliana (Mouse-ear cress).